A 116-amino-acid chain; its full sequence is Protein TRACHEARY ELEMENT DIFFERENTIATION-RELATED 6 (116 aa).

Over 1 to 24 the chain is Extracellular; sequence MASTDSVYRPTPTPDHDTTVVVVV. A helical transmembrane segment spans residues 25-45; that stretch reads FVSLGCVMFLAFLAFVIWFLI. The Cytoplasmic portion of the chain corresponds to 46-116; that stretch reads KKRSRKHRER…GVGSSVVSRS (71 aa).

Interacts with CESA7/IRX3, a subunit of the secondary cell wall (SCW)-related cellulose synthase complex. Expressed preferentially in differentiating vessel elements in seedlings.

The protein localises to the cell membrane. It is found in the secreted. Its subcellular location is the cell wall. Its function is as follows. Involved in the secondary cell wall (SCW) formation of vessel elements (e.g. protoxylem and metaxylem), thus promoting tracheary element (TE) differentiation. This is Protein TRACHEARY ELEMENT DIFFERENTIATION-RELATED 6 from Arabidopsis thaliana (Mouse-ear cress).